Consider the following 141-residue polypeptide: Large ribosomal subunit protein uL13 (141 aa).

Belongs to the universal ribosomal protein uL13 family. As to quaternary structure, part of the 50S ribosomal subunit.

In terms of biological role, this protein is one of the early assembly proteins of the 50S ribosomal subunit, although it is not seen to bind rRNA by itself. It is important during the early stages of 50S assembly. In Sulfurovum sp. (strain NBC37-1), this protein is Large ribosomal subunit protein uL13.